Consider the following 80-residue polypeptide: Serine protease inhibitor Kazal-type 1 (80 aa).

The N-terminal stretch at 1 to 23 is a signal peptide; that stretch reads MKVAVIFLLSALALLSLAGNTFS. Residues 27-80 form the Kazal-like domain; sequence TGKEASCHDAVAGCPRIYDPVCGTDGITYANECVLCFENRKRIEPVLIRKGGPC. 3 cysteine pairs are disulfide-bonded: Cys33-Cys62, Cys40-Cys59, and Cys48-Cys80.

As to expression, in the genital tract, expressed only in male accessory glands including seminal vesicle, coagulating gland and prostate.

The protein resides in the secreted. Serine protease inhibitor which exhibits anti-trypsin activity. In the pancreas, protects against trypsin-catalyzed premature activation of zymogens. Functionally, in the male reproductive tract, binds to sperm heads where it modulates sperm capacitance by inhibiting calcium uptake and nitrogen oxide (NO) production. This Mus musculus (Mouse) protein is Serine protease inhibitor Kazal-type 1.